We begin with the raw amino-acid sequence, 348 residues long: tRNA N6-adenosine threonylcarbamoyltransferase (348 aa).

Fe cation is bound by residues His111 and His115. Substrate-binding positions include 134-138 (LVSGG), Asp167, Gly180, Asp184, and Asn279. Asp307 is a Fe cation binding site.

This sequence belongs to the KAE1 / TsaD family. Fe(2+) serves as cofactor.

It localises to the cytoplasm. The enzyme catalyses L-threonylcarbamoyladenylate + adenosine(37) in tRNA = N(6)-L-threonylcarbamoyladenosine(37) in tRNA + AMP + H(+). Its function is as follows. Required for the formation of a threonylcarbamoyl group on adenosine at position 37 (t(6)A37) in tRNAs that read codons beginning with adenine. Is involved in the transfer of the threonylcarbamoyl moiety of threonylcarbamoyl-AMP (TC-AMP) to the N6 group of A37, together with TsaE and TsaB. TsaD likely plays a direct catalytic role in this reaction. This Synechocystis sp. (strain ATCC 27184 / PCC 6803 / Kazusa) protein is tRNA N6-adenosine threonylcarbamoyltransferase.